Consider the following 529-residue polypeptide: ATP synthase subunit alpha (529 aa).

173-180 (GDRQTGKT) provides a ligand contact to ATP.

This sequence belongs to the ATPase alpha/beta chains family. F-type ATPases have 2 components, CF(1) - the catalytic core - and CF(0) - the membrane proton channel. CF(1) has five subunits: alpha(3), beta(3), gamma(1), delta(1), epsilon(1). CF(0) has three main subunits: a(1), b(2) and c(9-12). The alpha and beta chains form an alternating ring which encloses part of the gamma chain. CF(1) is attached to CF(0) by a central stalk formed by the gamma and epsilon chains, while a peripheral stalk is formed by the delta and b chains.

The protein resides in the cell membrane. The catalysed reaction is ATP + H2O + 4 H(+)(in) = ADP + phosphate + 5 H(+)(out). Produces ATP from ADP in the presence of a proton gradient across the membrane. The alpha chain is a regulatory subunit. The sequence is that of ATP synthase subunit alpha from Streptomyces lividans.